We begin with the raw amino-acid sequence, 123 residues long: Large ribosomal subunit protein bL17 (123 aa).

It belongs to the bacterial ribosomal protein bL17 family. As to quaternary structure, part of the 50S ribosomal subunit. Contacts protein L32.

This is Large ribosomal subunit protein bL17 from Exiguobacterium sibiricum (strain DSM 17290 / CCUG 55495 / CIP 109462 / JCM 13490 / 255-15).